The primary structure comprises 1139 residues: Hapless 2 (1139 aa).

The signal sequence occupies residues Met1–Ala22. Topologically, residues Glu23–Arg630 are extracellular. 7 disulfide bridges follow: Cys33-Cys44, Cys136-Cys164, Cys147-Cys210, Cys165-Cys383, Cys167-Cys190, Cys366-Cys390, and Cys475-Cys482. Low complexity predominate over residues Ala241–Pro272. The disordered stretch occupies residues Ala241–Arg283. The N-linked (GlcNAc...) asparagine glycan is linked to Asn497. Cys515 and Cys556 are joined by a disulfide. An O-linked (GlcNAc...) threonine glycan is attached at Thr577. A helical transmembrane segment spans residues Leu631–Phe651. Residues Gly652–Lys1139 are Cytoplasmic-facing. Disordered stretches follow at residues Gly689–Ala719 and His741–Lys1139. Residues Gln753–Ala767 are compositionally biased toward basic and acidic residues. The span at Gly770–Ser789 shows a compositional bias: low complexity. Residues Trp829–Gly851 are compositionally biased toward basic and acidic residues. Positions Tyr868–Gly884 are enriched in gly residues. The span at Ala887–Pro904 shows a compositional bias: pro residues. 2 stretches are compositionally biased toward gly residues: residues Pro919–Gln943 and Arg955–Gly965. Over residues Gly978 to Gln991 the composition is skewed to pro residues. Over residues Gly1018–Gly1029 the composition is skewed to basic and acidic residues. Residues Gly1040–Gly1049 show a composition bias toward gly residues. Positions Ile1054 to Tyr1067 are enriched in pro residues. Gly residues-rich tracts occupy residues Gly1078 to Gly1096 and Gly1106 to Arg1118.

The protein belongs to the HAP2/GCS1 family. Monomer. Homotrimer. Membrane contact and insertion (via its extracellular domain) into a lipid membrane probably triggers trimerization. In terms of processing, the protein present at the cell membrane is rapidly degraded after fusion between male (minus) and female (plus) gametes, contrary to the protein present in intracellular pools. This may represent a mechanism to avoid fusion of several male gametes with a single female gamete. N-glycosylated.

Its subcellular location is the cell membrane. The protein resides in the cell projection. It localises to the cytoplasmic vesicle membrane. Functionally, during fertilization, required on male (minus) gametes for their fusion with female (plus) gametes. Required for membrane fusion, but not for the initial adhesion between gametes. Inserts (via its extracellular domain) into lipid membranes (in vitro). Probably initiates the fusion of gamete cell membranes by inserting its extracellular domain into the cell membrane of a female gamete. In Chlamydomonas reinhardtii (Chlamydomonas smithii), this protein is Hapless 2.